A 430-amino-acid chain; its full sequence is Glutamate-1-semialdehyde 2,1-aminomutase (430 aa).

Lys-266 is subject to N6-(pyridoxal phosphate)lysine.

The protein belongs to the class-III pyridoxal-phosphate-dependent aminotransferase family. HemL subfamily. In terms of assembly, homodimer. The cofactor is pyridoxal 5'-phosphate.

The protein resides in the cytoplasm. It catalyses the reaction (S)-4-amino-5-oxopentanoate = 5-aminolevulinate. It participates in porphyrin-containing compound metabolism; protoporphyrin-IX biosynthesis; 5-aminolevulinate from L-glutamyl-tRNA(Glu): step 2/2. The sequence is that of Glutamate-1-semialdehyde 2,1-aminomutase from Acidithiobacillus ferrooxidans (strain ATCC 23270 / DSM 14882 / CIP 104768 / NCIMB 8455) (Ferrobacillus ferrooxidans (strain ATCC 23270)).